Here is a 1023-residue protein sequence, read N- to C-terminus: RTX-I toxin determinant A from serotypes 1/9 (1023 aa).

Transmembrane regions (helical) follow at residues 226–256 (NNLP…ILSN), 297–326 (STTA…ADKF), and 367–406 (INSV…SGIL). Hemolysin-type calcium-binding repeat units lie at residues 730–747 (FGSR…DDEI), 748–765 (YGND…NDVI), 766–783 (HGGD…NDRL), 784–801 (IGGK…DDEL), 812–829 (LGGA…TNLF), and 830–847 (DGGV…KDIY).

This sequence belongs to the RTX prokaryotic toxin (TC 1.C.11) family. Palmitoylated by ApxIC. The toxin only becomes active when modified.

Its subcellular location is the secreted. It is found in the host cell membrane. One of the virulence factors of A.pleuropneumoniae, which has a strong hemolytic activity and is cytotoxic for alveolar macrophages and neutrophils. In Actinobacillus pleuropneumoniae (Haemophilus pleuropneumoniae), this protein is RTX-I toxin determinant A from serotypes 1/9 (apxIA).